The following is a 255-amino-acid chain: GTP cyclohydrolase III 1 (255 aa).

This sequence belongs to the archaeal-type GTP cyclohydrolase family.

The catalysed reaction is GTP + 3 H2O = 2-amino-5-formylamino-6-(5-phospho-D-ribosylamino)pyrimidin-4(3H)-one + 2 phosphate + 2 H(+). Its function is as follows. Catalyzes the formation of 2-amino-5-formylamino-6-ribofuranosylamino-4(3H)-pyrimidinone ribonucleotide monophosphate and inorganic phosphate from GTP. Also has an independent pyrophosphate phosphohydrolase activity. The protein is GTP cyclohydrolase III 1 (gch31) of Halobacterium salinarum (strain ATCC 700922 / JCM 11081 / NRC-1) (Halobacterium halobium).